The primary structure comprises 212 residues: ATP-dependent dethiobiotin synthetase BioD (212 aa).

Residue 12–17 coordinates ATP; it reads DCGKTF. A Mg(2+)-binding site is contributed by Thr-16. Lys-33 is a catalytic residue. Ser-37 is a substrate binding site. ATP contacts are provided by residues Asp-50, 110–113, and 170–171; these read EGAG and NC. 2 residues coordinate Mg(2+): Asp-50 and Glu-110.

The protein belongs to the dethiobiotin synthetase family. As to quaternary structure, homodimer. Requires Mg(2+) as cofactor.

It localises to the cytoplasm. It carries out the reaction (7R,8S)-7,8-diammoniononanoate + CO2 + ATP = (4R,5S)-dethiobiotin + ADP + phosphate + 3 H(+). It participates in cofactor biosynthesis; biotin biosynthesis; biotin from 7,8-diaminononanoate: step 1/2. Its function is as follows. Catalyzes a mechanistically unusual reaction, the ATP-dependent insertion of CO2 between the N7 and N8 nitrogen atoms of 7,8-diaminopelargonic acid (DAPA, also called 7,8-diammoniononanoate) to form a ureido ring. This is ATP-dependent dethiobiotin synthetase BioD from Legionella pneumophila (strain Lens).